We begin with the raw amino-acid sequence, 1359 residues long: Nuclear protein STH1/NPS1 (1359 aa).

Residue serine 38 is modified to Phosphoserine. The HSA domain occupies 307-383; it reads LERQQLLEKR…AKQRLAALKS (77 aa). One can recognise a Helicase ATP-binding domain in the interval 482–647; the sequence is VSLYNNHLNG…WALLNFVLPK (166 aa). ATP is bound at residue 495-502; the sequence is DEMGLGKT. The DEGH box signature appears at 597–600; the sequence is DEGH. Residues 795-956 enclose the Helicase C-terminal domain; it reads LLDRVLPKFK…NKSTAEEQEA (162 aa). Residues 1090–1246 are disordered; sequence RERRRLRQNG…TAAKKTKTKS (157 aa). The segment covering 1108-1126 has biased composition (polar residues); the sequence is LENTPEASETSLIENNSFT. Composition is skewed to basic residues over residues 1143–1154 and 1198–1210; these read RSKRRSSRKKRT and KKKK…KIKL. Residues 1219-1232 show a composition bias toward basic and acidic residues; the sequence is NDGKRAEEKPESKS. A compositionally biased stretch (basic residues) spans 1233–1246; sequence PAKKTAAKKTKTKS. One can recognise a Bromo domain in the interval 1257–1357; that stretch reads KLVEEMREQL…EFTDEWFKEH (101 aa).

This sequence belongs to the SNF2/RAD54 helicase family. Interacts directly with SFH1, CSE4, histones H3, H4 and H2B, and via its N-terminus, with RSC8. Interacts with LDB7, NPL6 and RTT102. Component of the two forms of the RSC complex composed of at least either RSC1 or RSC2, and ARP7, ARP9, LDB7, NPL6, RSC3, RSC30, RSC4, RSC58, RSC6, RSC8, RSC9, SFH1, STH1, HTL1 and probably RTT102. The complexes interact with histone and histone variant components of centromeric chromatin.

The protein localises to the nucleus. The enzyme catalyses ATP + H2O = ADP + phosphate + H(+). Its function is as follows. Catalytic component of the chromatin structure-remodeling complex (RSC), which is involved in transcription regulation and nucleosome positioning. RSC is responsible for the transfer of a histone octamer from a nucleosome core particle to naked DNA. The reaction requires ATP and involves an activated RSC-nucleosome intermediate. Remodeling reaction also involves DNA translocation, DNA twist and conformational change. As a reconfigurer of centromeric and flanking nucleosomes, RSC complex is required both for proper kinetochore function in chromosome segregation and, via a PKC1-dependent signaling pathway, for organization of the cellular cytoskeleton. This subunit is the essential ATPase of the complex. It is a DNA translocase capable of nucleosome remodeling. Required for full expression of early meiotic genes. Essential for mitotic growth and repression of CHA1 expression. Also involved in G2 phase control. The protein is Nuclear protein STH1/NPS1 (STH1) of Saccharomyces cerevisiae (strain ATCC 204508 / S288c) (Baker's yeast).